The primary structure comprises 505 residues: Cytochrome P450 monooxygenase iliC (505 aa).

A helical transmembrane segment spans residues 6–26; that stretch reads LIAQHSLTLTIASSVLLVFLL. C453 is a binding site for heme.

This sequence belongs to the cytochrome P450 family. Heme serves as cofactor.

The protein resides in the membrane. The enzyme catalyses (3E,5S)-3-[(2E,4E,8S,10E,12Z)-1-hydroxy-4,8-dimethyltetradeca-2,4,10,12-tetraen-1-ylidene]-5-[(4-hydroxyphenyl)methyl]pyrrolidine-2,4-dione + reduced [NADPH--hemoprotein reductase] + O2 = 3-[(2E,4E,8S,10E,12Z)-4,8-dimethyltetradeca-2,4,10,12-tetraenoyl]-4-hydroxy-5-(4-hydroxyphenyl)-1,2-dihydropyridin-2-one + oxidized [NADPH--hemoprotein reductase] + 2 H2O. It participates in mycotoxin biosynthesis. Functionally, cytochrome P450 monooxygenase; part of the gene cluster that mediates the biosynthesis of ilicicolin H, a 4-hydroxy-2-pyridonealkaloid that has potent and broad antifungal activities by inhibiting the mitochondrial respiration chain. IliC catalyzes the ring expansion of the tetramate intermediate to the acyclic 2-pyridone intermediate that contains the trans bis-diene chain. The biosynthesis of ilicicolin H starts with formation of the tetramic acid by the hybrid PKS-NRPS synthetase iliA with the partnering trans-enoyl reductase iliB since iliA lacks a designated enoylreductase (ER) domain. The cytochrome P450 monooxygenase iliC then catalyzes the ring expansion of the tetramate to the acyclic 2-pyridone. The pericyclase iliD further converts the acyclic 2-pyridone into 8-epi-ilicicolin H. 8-epi-ilicicolin H might then spontaneously convert to ilicicolin H since ilicicolin H is produced in the absence of the epimerase iliE, in contrast to what was observed for the Talaromyces variabilis ilicolin H biosynthetic pathway. This Neonectria sp. (strain DH2) protein is Cytochrome P450 monooxygenase iliC.